A 297-amino-acid polypeptide reads, in one-letter code: Putative 6-phosphogluconate dehydrogenase YqeC (297 aa).

NAD(+) contacts are provided by residues 7 to 12 (GLGKMG) and N94. Substrate-binding positions include N94 and 120 to 122 (SGG). The active-site Proton acceptor is the K170. Residue 173-174 (HN) participates in substrate binding. E177 (proton donor) is an active-site residue. Y178 and R268 together coordinate substrate.

Belongs to the 6-phosphogluconate dehydrogenase family.

Functionally, may act as NAD-dependent 6-P-gluconate dehydrogenase. The chain is Putative 6-phosphogluconate dehydrogenase YqeC (yqeC) from Bacillus subtilis (strain 168).